The primary structure comprises 234 residues: Alpha N-terminal protein methyltransferase 1 (234 aa).

S-adenosyl-L-methionine contacts are provided by residues G71, R76, 93-95 (DVV), 120-121 (LQ), and Q136.

It belongs to the methyltransferase superfamily. NTM1 family. Expressed in uterine cells and PVT neurons of the tail. Expressed in pharynx, intestine and DVB tail neuron.

It carries out the reaction N-terminal L-alanyl-L-prolyl-L-lysyl-[protein] + 3 S-adenosyl-L-methionine = N-terminal N,N,N-trimethyl-L-alanyl-L-prolyl-L-lysyl-[protein] + 3 S-adenosyl-L-homocysteine + 3 H(+). The catalysed reaction is N-terminal L-seryl-L-prolyl-L-lysyl-[protein] + 3 S-adenosyl-L-methionine = N-terminal N,N,N-trimethyl-L-seryl-L-prolyl-L-lysyl-[protein] + 3 S-adenosyl-L-homocysteine + 3 H(+). The enzyme catalyses N-terminal L-prolyl-L-prolyl-L-lysyl-[protein] + 2 S-adenosyl-L-methionine = N-terminal N,N-dimethyl-L-prolyl-L-prolyl-L-lysyl-[protein] + 2 S-adenosyl-L-homocysteine + 2 H(+). Functionally, alpha-N-methyltransferase that methylates the N-terminus of target proteins containing the N-terminal motif [Ala/Pro/Ser]-Pro-Lys when the initiator Met is cleaved. Specifically catalyzes mono-, di- or tri-methylation of exposed alpha-amino group of Ala or Ser residue in the [Ala/Ser]-Pro-Lys motif and mono- or di-methylation of Pro in the Pro-Pro-Lys motif. Probably required for the synthesis of neurotransmitter melatonin from serotonin, which plays a role in promoting a sleep-like state, called lethargus, during larval development. The sequence is that of Alpha N-terminal protein methyltransferase 1 from Caenorhabditis elegans.